The primary structure comprises 401 residues: 3-sulfinopropanoyl-CoA desulfinase (401 aa).

FAD is bound by residues 121–124, S130, and 153–156; these read ICIS and YWIT. 243 to 244 is a binding site for substrate; it reads YN. FAD contacts are provided by residues R272, Q339, S343, 366–370, and Q387; that span reads GGTAQ.

Belongs to the acyl-CoA dehydrogenase family. As to quaternary structure, homotetramer. Requires FAD as cofactor.

The enzyme catalyses 3-sulfinopropanoyl-CoA + H2O = propanoyl-CoA + sulfite + H(+). Functionally, catalyzes the conversion 3-sulfinopropanoyl-CoA (3SP-CoA) to propanoyl-CoA by abstraction of sulfite. Does not show dehydrogenase activity. Involved in the degradation of 3,3'-dithiodipropionate (DTDP), a sulfur-containing precursor substrate for biosynthesis of polythioesters (PTEs). The polypeptide is 3-sulfinopropanoyl-CoA desulfinase (Advenella mimigardefordensis (strain DSM 17166 / LMG 22922 / DPN7)).